The sequence spans 442 residues: NAD(P)H sulfur oxidoreductase (CoA-dependent) (442 aa).

Ala13–Ala14 lines the FAD pocket. Arg24 contacts CoA. FAD is bound by residues Glu35 to Ala36 and His42 to Pro44. CoA-binding positions include Ser41–Cys45, His62–Tyr63, and Arg72. The Redox-active role is filled by Cys45. FAD-binding residues include Val82, Asp280, and Ala298. 2 residues coordinate CoA: Asn302 and Lys358. Residue Tyr422 participates in FAD binding. Residues Trp430 and Arg438 each contribute to the CoA site.

The protein belongs to the class-III pyridine nucleotide-disulfide oxidoreductase family. In terms of assembly, homodimer. The cofactor is FAD.

The protein localises to the cytoplasm. It catalyses the reaction hydrogen sulfide + NADP(+) = sulfur + NADPH. It carries out the reaction hydrogen sulfide + NAD(+) = sulfur + NADH. The enzyme catalyses NADP(+) + 2 CoA = CoA-disulfide + NADPH + H(+). The catalysed reaction is NAD(+) + 2 CoA = CoA-disulfide + NADH + H(+). Catalyzes the CoA-dependent reduction of elemental sulfur (S(0)) to produce hydrogen sulfide. Can use both NADPH and NADH, but shows a preference for NADPH. May enable S(0) to be used, via sulfide, for iron-sulfur cluster synthesis by SipA. Also shows coenzyme A disulfide reductase (CoADR) activity with both NADH and NADPH. However, CoADR specific activity is about 20-fold lower than the sulfur reduction assay and CoADR activity appears to be an artifactual side reaction and is not thought to have any physiological relevance. Also shows NAD(P)H oxidase activity with both NADH and NADPH. This is NAD(P)H sulfur oxidoreductase (CoA-dependent) from Pyrococcus furiosus (strain ATCC 43587 / DSM 3638 / JCM 8422 / Vc1).